A 455-amino-acid chain; its full sequence is Transmembrane protease serine 5 (455 aa).

Over 1–49 the chain is Cytoplasmic; sequence MSPTLDDQSPMEIRCTEEGAGPGIFRMELGDQRQSISQSQRWCCLQRGC. Residues 50 to 70 form a helical; Signal-anchor for type II membrane protein membrane-spanning segment; the sequence is VILGVLGLLAGAGIASWLLVL. Over 71-455 the chain is Extracellular; that stretch reads YLWPAASPSI…DWIHDTVQVR (385 aa). The SRCR domain occupies 112 to 207; it reads FRINGEDLLL…SGRIVSLKCS (96 aa). 7 disulfides stabilise this stretch: Cys-135–Cys-196, Cys-148–Cys-206, Cys-209–Cys-328, Cys-243–Cys-259, Cys-342–Cys-411, Cys-374–Cys-390, and Cys-401–Cys-429. Residues Asn-163 and Asn-170 are each glycosylated (N-linked (GlcNAc...) asparagine). The Peptidase S1 domain occupies 218–453; sequence IVGGQAVASG…FLDWIHDTVQ (236 aa). Catalysis depends on charge relay system residues His-258 and Asp-308. Residues Asn-319 and Asn-375 are each glycosylated (N-linked (GlcNAc...) asparagine). Ser-405 functions as the Charge relay system in the catalytic mechanism.

This sequence belongs to the peptidase S1 family.

The protein resides in the cell membrane. Its function is as follows. May play a role in hearing. The protein is Transmembrane protease serine 5 (Tmprss5) of Mus musculus (Mouse).